A 153-amino-acid chain; its full sequence is 6,7-dimethyl-8-ribityllumazine synthase (153 aa).

5-amino-6-(D-ribitylamino)uracil-binding positions include F22, 56-58 (AFE), and 80-82 (CVI). A (2S)-2-hydroxy-3-oxobutyl phosphate-binding site is contributed by 85–86 (AT). H88 functions as the Proton donor in the catalytic mechanism. Residue F113 participates in 5-amino-6-(D-ribitylamino)uracil binding. (2S)-2-hydroxy-3-oxobutyl phosphate is bound at residue R127.

Belongs to the DMRL synthase family.

The catalysed reaction is (2S)-2-hydroxy-3-oxobutyl phosphate + 5-amino-6-(D-ribitylamino)uracil = 6,7-dimethyl-8-(1-D-ribityl)lumazine + phosphate + 2 H2O + H(+). It functions in the pathway cofactor biosynthesis; riboflavin biosynthesis; riboflavin from 2-hydroxy-3-oxobutyl phosphate and 5-amino-6-(D-ribitylamino)uracil: step 1/2. Its function is as follows. Catalyzes the formation of 6,7-dimethyl-8-ribityllumazine by condensation of 5-amino-6-(D-ribitylamino)uracil with 3,4-dihydroxy-2-butanone 4-phosphate. This is the penultimate step in the biosynthesis of riboflavin. The polypeptide is 6,7-dimethyl-8-ribityllumazine synthase (Endomicrobium trichonymphae).